Reading from the N-terminus, the 335-residue chain is Protein-arginine kinase (335 aa).

In terms of domain architecture, Phosphagen kinase C-terminal spans 21–244; sequence IVMSSRIRLA…NQIIHDEKQI (224 aa). ATP is bound by residues 24–28, His-82, Arg-115, 166–170, and 197–202; these read SSRIR, RASVM, and RGIYGE.

It belongs to the ATP:guanido phosphotransferase family.

The catalysed reaction is L-arginyl-[protein] + ATP = N(omega)-phospho-L-arginyl-[protein] + ADP + H(+). In terms of biological role, catalyzes the specific phosphorylation of arginine residues in proteins. This chain is Protein-arginine kinase, found in Staphylococcus aureus (strain Mu3 / ATCC 700698).